We begin with the raw amino-acid sequence, 476 residues long: Ribulose bisphosphate carboxylase large chain (476 aa).

Substrate-binding residues include Asn-124 and Thr-174. The active-site Proton acceptor is Lys-176. Lys-178 is a substrate binding site. Mg(2+) is bound by residues Lys-202, Asp-204, and Glu-205. Position 202 is an N6-carboxylysine (Lys-202). His-295 serves as the catalytic Proton acceptor. Residues Arg-296, His-328, and Ser-380 each coordinate substrate.

This sequence belongs to the RuBisCO large chain family. Type I subfamily. As to quaternary structure, heterohexadecamer of 8 large chains and 8 small chains; disulfide-linked. The disulfide link is formed within the large subunit homodimers. The cofactor is Mg(2+). The disulfide bond which can form in the large chain dimeric partners within the hexadecamer appears to be associated with oxidative stress and protein turnover.

It is found in the carboxysome. The enzyme catalyses 2 (2R)-3-phosphoglycerate + 2 H(+) = D-ribulose 1,5-bisphosphate + CO2 + H2O. It catalyses the reaction D-ribulose 1,5-bisphosphate + O2 = 2-phosphoglycolate + (2R)-3-phosphoglycerate + 2 H(+). RuBisCO catalyzes two reactions: the carboxylation of D-ribulose 1,5-bisphosphate, the primary event in carbon dioxide fixation, as well as the oxidative fragmentation of the pentose substrate in the photorespiration process. Both reactions occur simultaneously and in competition at the same active site. This chain is Ribulose bisphosphate carboxylase large chain, found in Trichodesmium erythraeum (strain IMS101).